Here is a 291-residue protein sequence, read N- to C-terminus: DegV domain-containing protein CPE0026 (291 aa).

The region spanning 4 to 286 is the DegV domain; that stretch reads FVIFTDSAAD…IGTLAVFFLG (283 aa). 2 residues coordinate hexadecanoate: threonine 63 and serine 95.

Its function is as follows. May bind long-chain fatty acids, such as palmitate, and may play a role in lipid transport or fatty acid metabolism. The protein is DegV domain-containing protein CPE0026 of Clostridium perfringens (strain 13 / Type A).